We begin with the raw amino-acid sequence, 116 residues long: Protein cop (116 aa).

In terms of biological role, putative control of replication message. This Staphylococcus aureus protein is Protein cop (cop).